The following is a 283-amino-acid chain: Acetyl-coenzyme A carboxylase carboxyl transferase subunit beta (283 aa).

The region spanning 27-283 is the CoA carboxyltransferase N-terminal domain; it reads VWVKCERCGE…LLDLHLRGEK (257 aa). Zn(2+) contacts are provided by Cys31, Cys34, Cys50, and Cys53. The segment at 31 to 53 adopts a C4-type zinc-finger fold; it reads CERCGEILFKKELDKNYKVCLKC.

Belongs to the AccD/PCCB family. As to quaternary structure, acetyl-CoA carboxylase is a heterohexamer composed of biotin carboxyl carrier protein (AccB), biotin carboxylase (AccC) and two subunits each of ACCase subunit alpha (AccA) and ACCase subunit beta (AccD). Zn(2+) is required as a cofactor.

The protein localises to the cytoplasm. The enzyme catalyses N(6)-carboxybiotinyl-L-lysyl-[protein] + acetyl-CoA = N(6)-biotinyl-L-lysyl-[protein] + malonyl-CoA. It participates in lipid metabolism; malonyl-CoA biosynthesis; malonyl-CoA from acetyl-CoA: step 1/1. Component of the acetyl coenzyme A carboxylase (ACC) complex. Biotin carboxylase (BC) catalyzes the carboxylation of biotin on its carrier protein (BCCP) and then the CO(2) group is transferred by the transcarboxylase to acetyl-CoA to form malonyl-CoA. The protein is Acetyl-coenzyme A carboxylase carboxyl transferase subunit beta of Pelotomaculum thermopropionicum (strain DSM 13744 / JCM 10971 / SI).